We begin with the raw amino-acid sequence, 669 residues long: Carnitine O-palmitoyltransferase 2, mitochondrial (669 aa).

The N-terminal 36 residues, 1–36, are a transit peptide targeting the mitochondrion; sequence MMAGLLSTQCNSTLSKLKHLSNNPALSVLTSTHRKY. The Mitochondrial matrix segment spans residues 37 to 190; that stretch reads SSKDGAGSEY…GLLEPEVFHL (154 aa). An intramembrane region (note=Mitochondrial inner membrane) is located at residues 191 to 220; sequence NPAKSDTDSFKKLIRWVPPSISWFGAYMVN. The Mitochondrial matrix segment spans residues 221 to 669; the sequence is AYPLDMSQYF…FTVLDGNPIH (449 aa). The active-site Proton acceptor is the His384. 464 to 476 contacts CoA; the sequence is GKEQLKKKKLSPD. (R)-carnitine contacts are provided by Tyr498, Ser500, and Thr511.

This sequence belongs to the carnitine/choline acetyltransferase family.

It localises to the mitochondrion inner membrane. It catalyses the reaction (R)-carnitine + hexadecanoyl-CoA = O-hexadecanoyl-(R)-carnitine + CoA. It carries out the reaction octanoyl-CoA + (R)-carnitine = O-octanoyl-(R)-carnitine + CoA. The catalysed reaction is decanoyl-CoA + (R)-carnitine = O-decanoyl-(R)-carnitine + CoA. The enzyme catalyses dodecanoyl-CoA + (R)-carnitine = O-dodecanoyl-R-carnitine + CoA. It catalyses the reaction tetradecanoyl-CoA + (R)-carnitine = O-tetradecanoyl-(R)-carnitine + CoA. It carries out the reaction (R)-carnitine + octadecanoyl-CoA = O-octadecanoyl-(R)-carnitine + CoA. The catalysed reaction is eicosanoyl-CoA + (R)-carnitine = O-eicosanoyl-(R)-carnitine + CoA. The enzyme catalyses (9Z)-tetradecenoyl-CoA + (R)-carnitine = O-(9Z)-tetradecenoyl-(R)-carnitine + CoA. It catalyses the reaction (5Z)-tetradecenoyl-CoA + (R)-carnitine = O-(5Z)-tetradecenoyl-(R)-carnitine + CoA. It carries out the reaction (R)-carnitine + (9Z)-octadecenoyl-CoA = O-(9Z)-octadecenoyl-(R)-carnitine + CoA. The catalysed reaction is 4,8-dimethylnonanoyl-CoA + (R)-carnitine = O-4,8-dimethylnonanoyl-(R)-carnitine + CoA. It participates in lipid metabolism; fatty acid beta-oxidation. Functionally, involved in the intramitochondrial synthesis of acylcarnitines from accumulated acyl-CoA metabolites. Reconverts acylcarnitines back into the respective acyl-CoA esters that can then undergo beta-oxidation, an essential step for the mitochondrial uptake of long-chain fatty acids and their subsequent beta-oxidation in the mitochondrion. Active with medium (C8-C12) and long-chain (C14-C18) acyl-CoA esters. In Danio rerio (Zebrafish), this protein is Carnitine O-palmitoyltransferase 2, mitochondrial (cpt2).